The chain runs to 522 residues: ARS-binding protein 1 (522 aa).

Residues 70-144 (DVKRNRPPKY…RKRHILHAIN (75 aa)) form the HTH CENPB-type domain. Residue Thr460 is modified to Phosphothreonine.

Interacts with mcm10.

It is found in the nucleus. Binds, preferentially, to the Maundrell ARS consensus sequence within ARS3002. This is ARS-binding protein 1 (abp1) from Schizosaccharomyces pombe (strain 972 / ATCC 24843) (Fission yeast).